The primary structure comprises 310 residues: tRNA-cytidine(32) 2-sulfurtransferase (310 aa).

Positions 47 to 52 match the PP-loop motif motif; the sequence is SGGKDS. Positions 122, 125, and 213 each coordinate [4Fe-4S] cluster.

This sequence belongs to the TtcA family. Homodimer. Mg(2+) is required as a cofactor. Requires [4Fe-4S] cluster as cofactor.

It is found in the cytoplasm. The enzyme catalyses cytidine(32) in tRNA + S-sulfanyl-L-cysteinyl-[cysteine desulfurase] + AH2 + ATP = 2-thiocytidine(32) in tRNA + L-cysteinyl-[cysteine desulfurase] + A + AMP + diphosphate + H(+). It participates in tRNA modification. Its function is as follows. Catalyzes the ATP-dependent 2-thiolation of cytidine in position 32 of tRNA, to form 2-thiocytidine (s(2)C32). The sulfur atoms are provided by the cysteine/cysteine desulfurase (IscS) system. This chain is tRNA-cytidine(32) 2-sulfurtransferase, found in Serratia proteamaculans (strain 568).